Reading from the N-terminus, the 364-residue chain is Phosphoserine aminotransferase (364 aa).

R40 contributes to the L-glutamate binding site. Pyridoxal 5'-phosphate is bound by residues 74–75, W100, T149, D170, and Q193; that span reads GT. At K194 the chain carries N6-(pyridoxal phosphate)lysine. A pyridoxal 5'-phosphate-binding site is contributed by 235 to 236; that stretch reads NT.

Belongs to the class-V pyridoxal-phosphate-dependent aminotransferase family. SerC subfamily. In terms of assembly, homodimer. It depends on pyridoxal 5'-phosphate as a cofactor. Expressed in ovary and head.

It catalyses the reaction O-phospho-L-serine + 2-oxoglutarate = 3-phosphooxypyruvate + L-glutamate. It carries out the reaction 4-(phosphooxy)-L-threonine + 2-oxoglutarate = (R)-3-hydroxy-2-oxo-4-phosphooxybutanoate + L-glutamate. It functions in the pathway amino-acid biosynthesis; L-serine biosynthesis; L-serine from 3-phospho-D-glycerate: step 2/3. It participates in cofactor biosynthesis; pyridoxine 5'-phosphate biosynthesis; pyridoxine 5'-phosphate from D-erythrose 4-phosphate: step 3/5. Catalyzes the reversible conversion of 3-phosphohydroxypyruvate to phosphoserine and of 3-hydroxy-2-oxo-4-phosphonooxybutanoate to phosphohydroxythreonine. In Drosophila melanogaster (Fruit fly), this protein is Phosphoserine aminotransferase.